The chain runs to 192 residues: Small ribosomal subunit protein bS16 (192 aa).

The segment at Ala153–Glu192 is disordered. Over residues Val178–Glu192 the composition is skewed to low complexity.

It belongs to the bacterial ribosomal protein bS16 family.

This Porphyromonas gingivalis (strain ATCC BAA-308 / W83) protein is Small ribosomal subunit protein bS16.